A 314-amino-acid chain; its full sequence is Very long chain fatty acid elongase 4 (314 aa).

Asn-20 carries an N-linked (GlcNAc...) asparagine glycan. The next 7 helical transmembrane spans lie at 42–62 (LMQS…FVWL), 78–98 (VLII…RELF), 127–147 (ALWW…FFIL), 165–185 (MFTL…FFGA), 188–208 (NSFI…GPWI), 217–237 (YLTM…ALSL), and 247–267 (MHWA…NFYI). The tract at residues 275–314 (KPKAGKTAMNGISANGVSKSEKQLMIENGKKQKNGKAKGD) is disordered. Basic and acidic residues predominate over residues 293 to 304 (KSEKQLMIENGK). Residues 305–314 (KQKNGKAKGD) show a composition bias toward basic residues. A Di-lysine motif motif is present at residues 310–314 (KAKGD).

It belongs to the ELO family. ELOVL4 subfamily. In terms of assembly, oligomer. In terms of processing, N-glycosylated. As to expression, expressed in the retina and at much lower level in the brain. Ubiquitous, highest expression in thymus, followed by testis, small intestine, ovary, and prostate. Little or no expression in heart, lung, liver, or leukocates.

It is found in the endoplasmic reticulum membrane. The catalysed reaction is a very-long-chain acyl-CoA + malonyl-CoA + H(+) = a very-long-chain 3-oxoacyl-CoA + CO2 + CoA. It catalyses the reaction tetracosanoyl-CoA + malonyl-CoA + H(+) = 3-oxohexacosanoyl-CoA + CO2 + CoA. It carries out the reaction hexacosanoyl-CoA + malonyl-CoA + H(+) = 3-oxooctacosanyol-CoA + CO2 + CoA. The enzyme catalyses octacosanoyl-CoA + malonyl-CoA + H(+) = 3-oxo-triacontanoyl-CoA + CO2 + CoA. The catalysed reaction is triacontanoyl-CoA + malonyl-CoA + H(+) = 3-oxo-dotriacontanoyl-CoA + CO2 + CoA. It catalyses the reaction (19Z,22Z,25Z,28Z,31Z)-tetratriacontapentaenoyl-CoA + malonyl-CoA + H(+) = 3-oxo-(21Z,24Z,27Z,30Z,33Z)-hexatriacontapentaenoyl-CoA + CO2 + CoA. It carries out the reaction (4Z,7Z,10Z,13Z,16Z,19Z)-docosahexaenoyl-CoA + malonyl-CoA + H(+) = 3-oxo-(6Z,9Z,12Z,15Z,18Z,21Z)-tetracosahexaenoyl-CoA + CO2 + CoA. The enzyme catalyses (7Z,10Z,13Z,16Z)-docosatetraenoyl-CoA + malonyl-CoA + H(+) = (9Z,12Z,15Z,18Z)-3-oxotetracosatetraenoyl-CoA + CO2 + CoA. The catalysed reaction is (11Z,14Z,17Z,20Z,23Z)-hexacosapentaenoyl-CoA + malonyl-CoA + H(+) = 3-oxo-(13Z,16Z,19Z,22Z,25Z)-octacosapentaenoyl-CoA + CO2 + CoA. It catalyses the reaction (13Z,16Z,19Z,22Z,25Z)-octacosapentaenoyl-CoA + malonyl-CoA + H(+) = 3-oxo-(15Z,18Z,21Z,24Z,27Z)-triacontapentaenoyl-CoA + CO2 + CoA. It carries out the reaction (15Z,18Z,21Z,24Z,27Z)-triacontapentaenoyl-CoA + malonyl-CoA + H(+) = 3-oxo-(17Z,20Z,23Z,26Z,29Z)-dotriacontapentaenoyl-CoA + CO2 + CoA. The enzyme catalyses (17Z,20Z,23Z,26Z,29Z)-dotriacontapentaenoyl-CoA + malonyl-CoA + H(+) = 3-oxo-(19Z,22Z,25Z,28Z,31Z)-tetratriacontapentaenoyl-CoA + CO2 + CoA. The catalysed reaction is (21Z,24Z,27Z,30Z,33Z)-hexatriacontapentaenoyl-CoA + malonyl-CoA + H(+) = 3-oxo-(23Z,26Z,29Z,32Z,35Z)-octatriacontapentaenoyl-CoA + CO2 + CoA. It catalyses the reaction (11Z,14Z,17Z,20Z)-hexacosatetraenoyl-CoA + malonyl-CoA + H(+) = (13Z,16Z,19Z,22Z)-3-oxooctacosatetraenoyl-CoA + CO2 + CoA. It carries out the reaction (13Z,16Z,19Z,22Z)-octacosatetraenoyl-CoA + malonyl-CoA + H(+) = 3-oxo-(15Z,18Z,21Z,24Z)-triacontatetraenoyl-CoA + CO2 + CoA. The enzyme catalyses (15Z,18Z,21Z,24Z)-triacontatetraenoyl-CoA + malonyl-CoA + H(+) = 3-oxo-(17Z,20Z,23Z,26Z)-dotriacontatetraenoyl-CoA + CO2 + CoA. The catalysed reaction is (17Z,20Z,23Z,26Z)-dotriacontatetraenoyl-CoA + malonyl-CoA + H(+) = 3-oxo-(19Z,22Z,25Z,28Z)-tetratriacontatetraenoyl-CoA + CO2 + CoA. It catalyses the reaction (19Z,22Z,25Z,28Z)-tetratriacontatetraenoyl-CoA + malonyl-CoA + H(+) = 3-oxo-(21Z,24Z,27Z,30Z)-hexatriacontatetraenoyl-CoA + CO2 + CoA. It carries out the reaction (21Z,24Z,27Z,30Z)-hexatriacontatetraenoyl-CoA + malonyl-CoA + H(+) = 3-oxo-(23Z,26Z,29Z,32Z)-octatriacontatetraenoyl-CoA + CO2 + CoA. The enzyme catalyses (6Z,9Z,12Z,15Z,18Z,21Z)-tetracosahexaenoyl-CoA + malonyl-CoA + H(+) = 3-oxo-(8Z,11Z,14Z,17Z,20Z,23Z)-hexacosahexaenoyl-CoA + CO2 + CoA. The catalysed reaction is (8Z,11Z,14Z,17Z,20Z,23Z)-hexacosahexaenoyl-CoA + malonyl-CoA + H(+) = 3-oxo-(10Z,13Z,16Z,19Z,22Z,25Z)-octacosahexaenoyl-CoA + CO2 + CoA. It catalyses the reaction (10Z,13Z,16Z,19Z,22Z,25Z)-octacosahexaenoyl-CoA + malonyl-CoA + H(+) = 3-oxo-(12Z,15Z,18Z,21Z,24Z,27Z)-triacontahexaenoyl-CoA + CO2 + CoA. It carries out the reaction (12Z,15Z,18Z,21Z,24Z,27Z)-triacontahexaenoyl-CoA + malonyl-CoA + H(+) = 3-oxo-(14Z,17Z,20Z,23Z,26Z,29Z)-dotriacontahexaenoyl-CoA + CO2 + CoA. The enzyme catalyses (14Z,17Z,20Z,23Z,26Z,29Z)-dotriacontahexaenoyl-CoA + malonyl-CoA + H(+) = 3-oxo-(16Z,19Z,22Z,25Z,28Z,31Z)-tetratriacontahexaenoyl-CoA + CO2 + CoA. The catalysed reaction is (16Z,19Z,22Z,25Z,28Z,31Z)-tetratriacontahexaenoyl-CoA + malonyl-CoA + H(+) = 3-oxo-(18Z,21Z,24Z,27Z,30Z,33Z)-hexatriacontahexaenoyl-CoA + CO2 + CoA. It catalyses the reaction (9Z,12Z,15Z,18Z,21Z)-tetracosapentaenoyl-CoA + malonyl-CoA + H(+) = 3-oxo-(11Z,14Z,17Z,20Z,23Z)-hexacosapentaenoyl-CoA + CO2 + CoA. Its pathway is lipid metabolism; fatty acid biosynthesis. In terms of biological role, catalyzes the first and rate-limiting reaction of the four reactions that constitute the long-chain fatty acids elongation cycle. This endoplasmic reticulum-bound enzymatic process allows the addition of 2 carbons to the chain of long- and very long-chain fatty acids (VLCFAs) per cycle. Condensing enzyme that catalyzes the synthesis of very long chain saturated (VLC-SFA) and polyunsaturated (PUFA) fatty acids that are involved in multiple biological processes as precursors of membrane lipids and lipid mediators. May play a critical role in early brain and skin development. This Homo sapiens (Human) protein is Very long chain fatty acid elongase 4.